Reading from the N-terminus, the 411-residue chain is Argininosuccinate synthase (411 aa).

ATP is bound at residue 11–19 (AYSGGLDTS). Position 88 (Y88) interacts with L-citrulline. G118 is an ATP binding site. The L-aspartate site is built by T120, N124, and D125. N124 lines the L-citrulline pocket. L-citrulline is bound by residues R128, S176, E261, and Y273.

Belongs to the argininosuccinate synthase family. Type 1 subfamily. In terms of assembly, homotetramer.

It localises to the cytoplasm. The enzyme catalyses L-citrulline + L-aspartate + ATP = 2-(N(omega)-L-arginino)succinate + AMP + diphosphate + H(+). The protein operates within amino-acid biosynthesis; L-arginine biosynthesis; L-arginine from L-ornithine and carbamoyl phosphate: step 2/3. The sequence is that of Argininosuccinate synthase from Lactiplantibacillus plantarum (strain ATCC BAA-793 / NCIMB 8826 / WCFS1) (Lactobacillus plantarum).